We begin with the raw amino-acid sequence, 146 residues long: Large ribosomal subunit protein uL13 (146 aa).

It belongs to the universal ribosomal protein uL13 family. As to quaternary structure, part of the 50S ribosomal subunit.

In terms of biological role, this protein is one of the early assembly proteins of the 50S ribosomal subunit, although it is not seen to bind rRNA by itself. It is important during the early stages of 50S assembly. In Borreliella burgdorferi (strain ATCC 35210 / DSM 4680 / CIP 102532 / B31) (Borrelia burgdorferi), this protein is Large ribosomal subunit protein uL13.